The following is a 1200-amino-acid chain: DNA polymerase subunit gamma-1 (1200 aa).

Disordered stretches follow at residues 471–515 (QKKT…RPSM) and 667–688 (MDLS…SSEH). A compositionally biased stretch (basic residues) spans 472 to 481 (KKTKISKKQK). Over residues 494 to 512 (LVEDHNEDPGPPTEKEESR) the composition is skewed to basic and acidic residues.

Belongs to the DNA polymerase type-A family. As to quaternary structure, heterotrimer composed of a catalytic subunit and a homodimer of accessory subunits. Mg(2+) serves as cofactor.

The protein resides in the mitochondrion. The protein localises to the mitochondrion matrix. It localises to the mitochondrion nucleoid. The enzyme catalyses DNA(n) + a 2'-deoxyribonucleoside 5'-triphosphate = DNA(n+1) + diphosphate. Functionally, involved in the replication of mitochondrial DNA. Associates with mitochondrial DNA. The sequence is that of DNA polymerase subunit gamma-1 (polg) from Xenopus laevis (African clawed frog).